Consider the following 417-residue polypeptide: Phosphoglycerate kinase 2 (417 aa).

At S2 the chain carries N-acetylserine. Phosphoserine is present on residues S2 and S4. K11 bears the N6-acetyllysine mark. V23, D24, F25, N26, Q38, and R39 together coordinate (2R)-3-phosphoglycerate. K48 is subject to N6-acetyllysine. The (2R)-3-phosphoglycerate site is built by S62, H63, G65, and R66. N6-acetyllysine is present on residues K75, K86, and K97. (2R)-3-phosphoglycerate-binding residues include L122 and R123. An N6-acetyllysine mark is found at K131 and K146. Positions 170 and 171 each coordinate (2R)-3-phosphoglycerate. Y196 is modified (phosphotyrosine). K199 bears the N6-acetyllysine mark. ADP is bound at residue G214. G214 is a CDP binding site. AMP contacts are provided by A215 and K216. A215 is an ATP binding site. A215 lines the Mg(2+) pocket. Residues A218 and D219 each coordinate Mg(2+). D219 is a CDP binding site. An AMP-binding site is contributed by K220. K220 is a binding site for ATP. G238 is a binding site for ADP. Residue G238 participates in CDP binding. An AMP-binding site is contributed by G239. Position 239 (G239) interacts with ATP. N6-acetyllysine is present on residues K267 and K291. G313 lines the AMP pocket. Residue G313 coordinates ATP. The CDP site is built by G338, V340, and F343. F343 contacts ADP. E344 is a binding site for AMP. ATP contacts are provided by E344, D375, and T376. D375 serves as a coordination point for Mg(2+).

The protein belongs to the phosphoglycerate kinase family. As to quaternary structure, monomer. Requires Mg(2+) as cofactor.

The protein localises to the cytoplasm. The catalysed reaction is (2R)-3-phosphoglycerate + ATP = (2R)-3-phospho-glyceroyl phosphate + ADP. It functions in the pathway carbohydrate degradation; glycolysis; pyruvate from D-glyceraldehyde 3-phosphate: step 2/5. In terms of biological role, essential for sperm motility and male fertility but is not required for the completion of spermatogenesis. The polypeptide is Phosphoglycerate kinase 2 (PGK2) (Equus caballus (Horse)).